Reading from the N-terminus, the 299-residue chain is Circadian clock oscillator protein KaiA (299 aa).

The KaiA N-terminal domain maps to 1 to 169 (MVSKLSLYLV…RLAEKLRERL (169 aa)). Residues 3–135 (SKLSLYLVTP…LHLAPSCALS (133 aa)) are psR domain, binds oxidized quinones. Positions 170–178 (GYLGVYYKR) are flexible linker. One can recognise a KaiA C-terminal domain in the interval 179-287 (NPKYFYRSLS…CEMYRRSIPR (109 aa)).

Homodimer. The KaiABC complex composition changes during the circadian cycle to control KaiC phosphorylation. Complexes KaiC(6), KaiA(2-4):KaiC(6), KaiB(6):KaiC(6) and KaiC(6):KaiB(6):KaiA(12) are among the most important forms, many form cooperatively. KaiA and CikA bind to the same region of the KaiB(fs) form and therefore compete.

Its function is as follows. Key component of the KaiABC oscillator complex, which constitutes the main circadian regulator in cyanobacteria. Complex composition changes during the circadian cycle to control KaiC phosphorylation. KaiA stimulates KaiC autophosphorylation, while KaiB sequesters KaiA, leading to KaiC autodephosphorylation. KaiA binding to the KaiC CII domain during the subjective day yields KaiA(2-4):KaiC(6) complexes which stimulate KaiC autophosphorylation. Phospho-Ser-431 KaiC accumulation triggers binding of KaiB during the subjective night to form the KaiB(6):KaiC(6) complex, leading to changes in the output regulators CikA and SasA. KaiB(6):KaiC(6) formation exposes a site for KaiA binding on KaiB that sequesters KaiA from KaiC's CII domain, making the KaiC(6):KaiB(6):KaiA(12) complex resulting in KaiC autodephosphorylation. Complete dephosphorylation of KaiC leads to dissociation of KaiA(2):KaiB(1), completing 1 cycle of the Kai oscillator. Functionally, binds oxidized quinones via the N-terminal PsR domain, allowing it to sense redox changes and possibly mediate clock input. The sequence is that of Circadian clock oscillator protein KaiA from Picosynechococcus sp. (strain ATCC 27264 / PCC 7002 / PR-6) (Agmenellum quadruplicatum).